Here is an 842-residue protein sequence, read N- to C-terminus: Elongation factor 2 (842 aa).

The 330-residue stretch at 17–346 (TNVRNMSVIA…MIVMHLPSPV (330 aa)) folds into the tr-type G domain. GTP contacts are provided by residues 26-33 (AHVDHGKS), 158-161 (NKVD), and 213-215 (SGL). Diphthamide is present on H699.

It belongs to the TRAFAC class translation factor GTPase superfamily. Classic translation factor GTPase family. EF-G/EF-2 subfamily.

The protein localises to the cytoplasm. The enzyme catalyses GTP + H2O = GDP + phosphate + H(+). Catalyzes the GTP-dependent ribosomal translocation step during translation elongation. During this step, the ribosome changes from the pre-translocational (PRE) to the post-translocational (POST) state as the newly formed A-site-bound peptidyl-tRNA and P-site-bound deacylated tRNA move to the P and E sites, respectively. Catalyzes the coordinated movement of the two tRNA molecules, the mRNA and conformational changes in the ribosome. This is Elongation factor 2 (EFT1) from Candida glabrata (strain ATCC 2001 / BCRC 20586 / JCM 3761 / NBRC 0622 / NRRL Y-65 / CBS 138) (Yeast).